Here is a 609-residue protein sequence, read N- to C-terminus: Polyadenylate-binding protein 7 (609 aa).

4 RRM domains span residues 24–102, 112–189, 201–278, and 304–381; these read ASLY…WSVR, GNVF…KFMK, TNLY…RAQK, and SNIY…IAQK. The region spanning 509 to 586 is the PABC domain; that stretch reads EMKKSIQQRQ…AFEVLKSSKT (78 aa).

Belongs to the polyadenylate-binding protein type-1 family. Expressed predominantly in siliques.

It localises to the cytoplasm. The protein resides in the nucleus. Its function is as follows. Binds the poly(A) tail of mRNA. Appears to be an important mediator of the multiple roles of the poly(A) tail in mRNA biogenesis, stability and translation. The polypeptide is Polyadenylate-binding protein 7 (PAB7) (Arabidopsis thaliana (Mouse-ear cress)).